The following is a 90-amino-acid chain: MTISRTEQRVLHVLALGGRILHERGEGPKITTITCVTRDGLILADCDLAVFSRLRRRRLIESRAGGPYRLSPLGRAMVRPQSDNQGHITC.

It belongs to the UPF0386 family.

This is UPF0386 protein Rru_A2144 from Rhodospirillum rubrum (strain ATCC 11170 / ATH 1.1.1 / DSM 467 / LMG 4362 / NCIMB 8255 / S1).